Consider the following 521-residue polypeptide: Protein YjiT (521 aa).

In Escherichia coli (strain K12), this protein is Protein YjiT (yjiT).